The chain runs to 1187 residues: Disease resistance protein TAO1 (1187 aa).

Residues 38 to 202 (WLHPVFLSFR…KISKDVSDVL (165 aa)) form the TIR domain. Glu113 is a catalytic residue. An NB-ARC domain is found at 217–478 (EAHTTEITSL…FFRRERIETL (262 aa)). LRR repeat units follow at residues 498 to 522 (DKSL…GLDI), 611 to 633 (SRKL…KFNP), 635 to 658 (FLVK…PIRN), 660 to 679 (KWMD…FSTA), 680 to 703 (TNLQ…IGNA), 704 to 727 (TNLL…IGNL), 728 to 750 (TNLK…SFGN), 752 to 775 (TSLK…IGNI), 799 to 823 (NTNL…MLNL), 824 to 849 (TRLE…VINL), 870 to 894 (ATNL…IWNI), 895 to 918 (TNLQ…VENA), 920 to 942 (NLQS…IWRI), and 953 to 974 (CSSL…LILD).

The catalysed reaction is NAD(+) + H2O = ADP-D-ribose + nicotinamide + H(+). Functionally, TIR-NB-LRR receptor-like protein that contributes to disease resistance induced by the Pseudomonas syringae type III effector AvrB. Acts additively with RPM1 to generate a full disease resistance response to P.syringae expressing this type III effector. The chain is Disease resistance protein TAO1 from Arabidopsis thaliana (Mouse-ear cress).